Consider the following 150-residue polypeptide: Peptide deformylase (150 aa).

2 residues coordinate Fe cation: C88 and H130. E131 is a catalytic residue. Fe cation is bound at residue H134.

Belongs to the polypeptide deformylase family. It depends on Fe(2+) as a cofactor.

The catalysed reaction is N-terminal N-formyl-L-methionyl-[peptide] + H2O = N-terminal L-methionyl-[peptide] + formate. In terms of biological role, removes the formyl group from the N-terminal Met of newly synthesized proteins. Requires at least a dipeptide for an efficient rate of reaction. N-terminal L-methionine is a prerequisite for activity but the enzyme has broad specificity at other positions. This chain is Peptide deformylase, found in Desulfitobacterium hafniense (strain DSM 10664 / DCB-2).